We begin with the raw amino-acid sequence, 278 residues long: Hydroxyethylthiazole kinase (278 aa).

Residue methionine 46 participates in substrate binding. 2 residues coordinate ATP: arginine 122 and threonine 168. Position 195 (glycine 195) interacts with substrate.

This sequence belongs to the Thz kinase family. Mg(2+) is required as a cofactor.

It catalyses the reaction 5-(2-hydroxyethyl)-4-methylthiazole + ATP = 4-methyl-5-(2-phosphooxyethyl)-thiazole + ADP + H(+). Its pathway is cofactor biosynthesis; thiamine diphosphate biosynthesis; 4-methyl-5-(2-phosphoethyl)-thiazole from 5-(2-hydroxyethyl)-4-methylthiazole: step 1/1. Functionally, catalyzes the phosphorylation of the hydroxyl group of 4-methyl-5-beta-hydroxyethylthiazole (THZ). The sequence is that of Hydroxyethylthiazole kinase from Chloroflexus aggregans (strain MD-66 / DSM 9485).